We begin with the raw amino-acid sequence, 309 residues long: 4-hydroxy-3-methylbut-2-enyl diphosphate reductase (309 aa).

A [4Fe-4S] cluster-binding site is contributed by Cys-12. The (2E)-4-hydroxy-3-methylbut-2-enyl diphosphate site is built by His-41 and His-74. His-41 and His-74 together coordinate dimethylallyl diphosphate. 2 residues coordinate isopentenyl diphosphate: His-41 and His-74. Cys-96 serves as a coordination point for [4Fe-4S] cluster. His-124 provides a ligand contact to (2E)-4-hydroxy-3-methylbut-2-enyl diphosphate. Residue His-124 coordinates dimethylallyl diphosphate. His-124 is a binding site for isopentenyl diphosphate. Glu-126 (proton donor) is an active-site residue. Thr-167 contributes to the (2E)-4-hydroxy-3-methylbut-2-enyl diphosphate binding site. Residue Cys-197 coordinates [4Fe-4S] cluster. (2E)-4-hydroxy-3-methylbut-2-enyl diphosphate-binding residues include Ser-225, Ser-226, Asn-227, and Ser-269. Positions 225, 226, 227, and 269 each coordinate dimethylallyl diphosphate. Isopentenyl diphosphate-binding residues include Ser-225, Ser-226, Asn-227, and Ser-269.

The protein belongs to the IspH family. [4Fe-4S] cluster is required as a cofactor.

It catalyses the reaction isopentenyl diphosphate + 2 oxidized [2Fe-2S]-[ferredoxin] + H2O = (2E)-4-hydroxy-3-methylbut-2-enyl diphosphate + 2 reduced [2Fe-2S]-[ferredoxin] + 2 H(+). The enzyme catalyses dimethylallyl diphosphate + 2 oxidized [2Fe-2S]-[ferredoxin] + H2O = (2E)-4-hydroxy-3-methylbut-2-enyl diphosphate + 2 reduced [2Fe-2S]-[ferredoxin] + 2 H(+). The protein operates within isoprenoid biosynthesis; dimethylallyl diphosphate biosynthesis; dimethylallyl diphosphate from (2E)-4-hydroxy-3-methylbutenyl diphosphate: step 1/1. It participates in isoprenoid biosynthesis; isopentenyl diphosphate biosynthesis via DXP pathway; isopentenyl diphosphate from 1-deoxy-D-xylulose 5-phosphate: step 6/6. In terms of biological role, catalyzes the conversion of 1-hydroxy-2-methyl-2-(E)-butenyl 4-diphosphate (HMBPP) into a mixture of isopentenyl diphosphate (IPP) and dimethylallyl diphosphate (DMAPP). Acts in the terminal step of the DOXP/MEP pathway for isoprenoid precursor biosynthesis. The sequence is that of 4-hydroxy-3-methylbut-2-enyl diphosphate reductase from Shewanella pealeana (strain ATCC 700345 / ANG-SQ1).